Reading from the N-terminus, the 184-residue chain is Probable gluconokinase (184 aa).

G11 to S18 is a binding site for ATP.

This sequence belongs to the gluconokinase GntK/GntV family.

The enzyme catalyses D-gluconate + ATP = 6-phospho-D-gluconate + ADP + H(+). It participates in carbohydrate acid metabolism; D-gluconate degradation. The protein is Probable gluconokinase (Idnk) of Mus musculus (Mouse).